A 431-amino-acid chain; its full sequence is Putative serine/threonine-protein kinase A (431 aa).

The 260-residue stretch at 20–279 (YLNKGIVGLG…VREIFQIPYI (260 aa)) folds into the Protein kinase domain. ATP is bound by residues 26-34 (VGLGSYGEA) and Lys-49. Residue Asp-147 is the Proton acceptor of the active site. Residues 331–429 (DVTHRGHVNK…WVHAIQRGIG (99 aa)) form the PH domain.

It belongs to the protein kinase superfamily. Ser/Thr protein kinase family.

It carries out the reaction L-seryl-[protein] + ATP = O-phospho-L-seryl-[protein] + ADP + H(+). It catalyses the reaction L-threonyl-[protein] + ATP = O-phospho-L-threonyl-[protein] + ADP + H(+). The protein is Putative serine/threonine-protein kinase A (NRKA) of Trypanosoma brucei brucei.